Here is a 521-residue protein sequence, read N- to C-terminus: Probable cytochrome P450 12d1 proximal, mitochondrial (521 aa).

A mitochondrion-targeting transit peptide spans 1–19; that stretch reads MNTLSSARSVAIYVGPVRS. Cysteine 467 serves as a coordination point for heme.

This sequence belongs to the cytochrome P450 family. Requires heme as cofactor.

Its subcellular location is the mitochondrion membrane. In Drosophila melanogaster (Fruit fly), this protein is Probable cytochrome P450 12d1 proximal, mitochondrial (Cyp12d1-p).